The primary structure comprises 166 residues: 2-amino-4-hydroxy-6-hydroxymethyldihydropteridine pyrophosphokinase (166 aa).

It belongs to the HPPK family.

The catalysed reaction is 6-hydroxymethyl-7,8-dihydropterin + ATP = (7,8-dihydropterin-6-yl)methyl diphosphate + AMP + H(+). It functions in the pathway cofactor biosynthesis; tetrahydrofolate biosynthesis; 2-amino-4-hydroxy-6-hydroxymethyl-7,8-dihydropteridine diphosphate from 7,8-dihydroneopterin triphosphate: step 4/4. Catalyzes the transfer of pyrophosphate from adenosine triphosphate (ATP) to 6-hydroxymethyl-7,8-dihydropterin, an enzymatic step in folate biosynthesis pathway. The sequence is that of 2-amino-4-hydroxy-6-hydroxymethyldihydropteridine pyrophosphokinase (folK) from Streptococcus pyogenes serotype M18 (strain MGAS8232).